We begin with the raw amino-acid sequence, 366 residues long: Homer protein homolog 1 (366 aa).

N-acetylglycine is present on Gly-2. The 109-residue stretch at 2–110 folds into the WH1 domain; it reads GEQPIFSTRA…EKFQEFKEAA (109 aa). The tract at residues 114–189 is disordered; it reads KEKSQEKMEL…RTQALSHASS (76 aa). Composition is skewed to polar residues over residues 138 to 147 and 155 to 170; these read SPLTPESING and DVTQNSEPRAEPTQNA. A coiled-coil region spans residues 193 to 364; sequence KHWEAELATL…LRDNLAKLLE (172 aa). The segment at 302–366 is required for tetramerization; that stretch reads KLQEVEIRNK…DNLAKLLECS (65 aa). Phosphoserine is present on Ser-318.

The protein belongs to the Homer family. Tetramer; this tetrameric structure is critical for forming the high-order complex with SHANK1, which in turn is necessary for the structural and functional integrity of dendritic spines. Isoform 1, isoform 2 and isoform 3 encode a coiled-coil structure that mediates homo- and heteromultimerization. Interacts with GRM1, GRM5, ITPR1, DNM3, RYR1, RYR2 and SHANK3. Interacts with IFT57 and OPHN1. Interacts with SHANK1; forms high-order polymerized complex with a mesh-like network structure, at least composed of SHANK1, HOMER1 and DLGAP1; the complex formation is SHANK1 multimerization dependent. Interacts with NFATC4. Interacts with DAGLA (via PPXXF motif); this interaction is required for the cell membrane localization of DAGLA. Interacts with SRGAP2. Expressed in skeletal muscle at the level of the Z line, in the forebrain and cerebellum. As to expression, expressed in cardiac and skeletal muscle. In terms of tissue distribution, expressed in the hippocampus. Expressed in skeletal muscle at the level of the Z line, in the heart, forebrain and cerebellum.

It is found in the cytoplasm. Its subcellular location is the postsynaptic density. It localises to the synapse. The protein localises to the cell projection. The protein resides in the dendritic spine. Functionally, postsynaptic density scaffolding protein. Binds and cross-links cytoplasmic regions of GRM1, GRM5, ITPR1, DNM3, RYR1, RYR2, SHANK1 and SHANK3. By physically linking GRM1 and GRM5 with ER-associated ITPR1 receptors, it aids the coupling of surface receptors to intracellular calcium release. May also couple GRM1 to PI3 kinase through its interaction with AGAP2. Isoform 1 regulates the trafficking and surface expression of GRM5. Differentially regulates the functions of the calcium activated channel ryanodine receptors RYR1 and RYR2. Isoform 1 decreases the activity of RYR2, and increases the activity of RYR1, whereas isoform 5 counteracts the effects by competing for binding sites. Isoform 3 regulates the trafficking and surface expression of GRM5. Isoform 5 acts as a natural dominant negative, in dynamic competition with constitutively expressed isoform 1, isoform 2 and isoform 3 to regulate synaptic metabotropic glutamate function. Isoform 5, may be involved in the structural changes that occur at synapses during long-lasting neuronal plasticity and development. Forms a high-order complex with SHANK1, which in turn is necessary for the structural and functional integrity of dendritic spines. Negatively regulates T cell activation by inhibiting the calcineurin-NFAT pathway. Acts by competing with calcineurin/PPP3CA for NFAT protein binding, hence preventing NFAT activation by PPP3CA. The chain is Homer protein homolog 1 from Mus musculus (Mouse).